The primary structure comprises 339 residues: Paired box protein Pax-9 (339 aa).

A DNA-binding region (paired) is located at residues 2–128 (AFGEVNQLGG…SSISRILRNK (127 aa)). Residues 5-61 (EVNQLGGVFVNGRPLPNAIRLRIVELAQLGIRPCDISRQLRVSHGCVSKILARYNET) are PAI subdomain. Residues 80–128 (TVVKHIRTYKQRDPGIFAWEIRDRLLADGVCDKYNVPSVSSISRILRNK) form an RED subdomain region.

It is found in the nucleus. The protein is Paired box protein Pax-9 (PAX9) of Gallus gallus (Chicken).